The following is a 458-amino-acid chain: MESAPDAEEARTVREALGRYEAALEGAVRALHEDMQGLQRGVEQRVAEALRLAGPLARTVAELQRDNQRLQTQLERLTRQVESLGLTTGLAPAPGTPSPPPAPGVPNRAPRLGTARFASHATFSLSGRSQSLDHHDEASELEMRRTSNSCIIENGHQPGADPGDGPPEATQTIPAPEPPKPRPVSLSLRLPHQPVTAVTRVSERFSGETSATALSPTSAAILGGLSSSPSEATTPWTPSPSEKNSSLPRSLSSSGFGAMTASRNNNSPPLVTPPQSPPSPQPPATTQAHRPGERRRELVRSQTLPRTSGAQARKALFEKWEQDTAGKGKGETRAKLKRSQSFGVASASSIKQILLEWCRSKTLGYQHVDLQNFSSSWSDGMAFCALVHSFFPDAFDYNALSPTQRRQNFELAFTMAENLANCERLIEVEDMMVMGRKPDPMCVFTYVQSLYNHLRRFE.

A coiled-coil region spans residues 24-88 (LEGAVRALHE…RQVESLGLTT (65 aa)). 3 disordered regions span residues 87-111 (TTGLAPAPGTPSPPPAPGVPNRAPR), 123-142 (FSLSGRSQSLDHHDEASELE), and 151-312 (IIEN…GAQA). Residues 94-104 (PGTPSPPPAPG) are compositionally biased toward pro residues. The residue at position 96 (threonine 96) is a Phosphothreonine. Phosphoserine is present on residues serine 98, serine 126, and serine 131. Residues 131–142 (SLDHHDEASELE) show a composition bias toward basic and acidic residues. Low complexity-rich tracts occupy residues 158–167 (PGADPGDGPP) and 209–220 (TSATALSPTSAA). The segment covering 225 to 244 (LSSSPSEATTPWTPSPSEKN) has biased composition (polar residues). Low complexity predominate over residues 245-254 (SSLPRSLSSS). Phosphoserine occurs at positions 252, 254, and 267. Pro residues predominate over residues 270 to 283 (LVTPPQSPPSPQPP). Threonine 272 carries the phosphothreonine modification. Serine 276 bears the Phosphoserine mark. Basic and acidic residues predominate over residues 290 to 299 (RPGERRRELV). Over residues 300-310 (RSQTLPRTSGA) the composition is skewed to polar residues. Serine 341 carries the phosphoserine modification. Residues 348 to 455 (SSIKQILLEW…YVQSLYNHLR (108 aa)) form the Calponin-homology (CH) domain.

The protein belongs to the smoothelin family.

The polypeptide is Smoothelin-like protein 2 (SMTNL2) (Bos taurus (Bovine)).